Here is a 315-residue protein sequence, read N- to C-terminus: MYEWLNALPKAELHLHLEGSLEPELLFALAERNKIALPWNDVEALRSAYAFNNLQEFLDLYYQGADVLRSEQDFYDLTWAYLQRCKSQNVIHTEPFFDPQTHTDRGIPFEVVLNGINQALKDGREQLGISSGLILSFLRHLSEEEAQKTLDQALPFRDAFIAVGLDSSEKGHPPSKFQRVFDRARSEGFEAVAHAGEEGPPEYIWEALDLLKIKRIDHGVRAIEDERLMQRIIDEQIPLTVCPLSNTKLCVFDHMSQHNILDMLERGVKVTVNSDDPAYFGGYVTENFHALHTHLGMTEDQARRLAQNSLDARLV.

Residues His14, His16, and His194 each coordinate Zn(2+). Glu197 (proton donor) is an active-site residue. Asp275 serves as a coordination point for Zn(2+). Asp276 provides a ligand contact to substrate.

It belongs to the metallo-dependent hydrolases superfamily. Adenosine and AMP deaminases family. Adenine deaminase type 2 subfamily. It depends on Zn(2+) as a cofactor.

It catalyses the reaction adenine + H2O + H(+) = hypoxanthine + NH4(+). In terms of biological role, catalyzes the hydrolytic deamination of adenine to hypoxanthine. Plays an important role in the purine salvage pathway and in nitrogen catabolism. This is Adenine deaminase from Pseudomonas putida (strain W619).